A 669-amino-acid polypeptide reads, in one-letter code: DNA ligase (669 aa).

NAD(+) is bound by residues 34 to 38 (DAEYD), 83 to 84 (SL), and Glu-113. Lys-115 (N6-AMP-lysine intermediate) is an active-site residue. NAD(+) contacts are provided by Arg-136, Glu-170, Lys-286, and Lys-310. Zn(2+) contacts are provided by Cys-404, Cys-407, Cys-422, and Cys-427. One can recognise a BRCT domain in the interval 591–669 (IADSPFAGKT…EEALVKAISH (79 aa)).

This sequence belongs to the NAD-dependent DNA ligase family. LigA subfamily. It depends on Mg(2+) as a cofactor. Mn(2+) is required as a cofactor.

It carries out the reaction NAD(+) + (deoxyribonucleotide)n-3'-hydroxyl + 5'-phospho-(deoxyribonucleotide)m = (deoxyribonucleotide)n+m + AMP + beta-nicotinamide D-nucleotide.. Functionally, DNA ligase that catalyzes the formation of phosphodiester linkages between 5'-phosphoryl and 3'-hydroxyl groups in double-stranded DNA using NAD as a coenzyme and as the energy source for the reaction. It is essential for DNA replication and repair of damaged DNA. This is DNA ligase from Halalkalibacterium halodurans (strain ATCC BAA-125 / DSM 18197 / FERM 7344 / JCM 9153 / C-125) (Bacillus halodurans).